The following is a 522-amino-acid chain: Wax ester synthase/diacylglycerol acyltransferase 4 (522 aa).

Positions 1 to 12 (MEIETRPHISGD) are enriched in basic and acidic residues. The segment at 1 to 20 (MEIETRPHISGDEKEEEQPL) is disordered. Residues 1–205 (MEIETRPHIS…SDSRLLWLVK (205 aa)) are Cytoplasmic-facing. H149 serves as the catalytic Proton acceptor. Residues 206–226 (VIWTAVILGLNTVCDALEFIV) traverse the membrane as a helical segment. The Lumenal portion of the chain corresponds to 227-522 (TTLFVKDTET…QIAGLLYRML (296 aa)). Residues N270 and N409 are each glycosylated (N-linked (GlcNAc...) asparagine).

In the N-terminal section; belongs to the long-chain O-acyltransferase family. Mostly expressed in roots, flowers and siliques.

It is found in the cell membrane. Its subcellular location is the endoplasmic reticulum membrane. The catalysed reaction is an acyl-CoA + a 1,2-diacyl-sn-glycerol = a triacyl-sn-glycerol + CoA. It catalyses the reaction a long chain fatty alcohol + a fatty acyl-CoA = a wax ester + CoA. Its pathway is glycerolipid metabolism; triacylglycerol biosynthesis. It functions in the pathway lipid metabolism. Bifunctional wax ester synthase/diacylglycerol acyltransferase. Involved in cuticular wax biosynthesis. This chain is Wax ester synthase/diacylglycerol acyltransferase 4, found in Arabidopsis thaliana (Mouse-ear cress).